Consider the following 542-residue polypeptide: Probable quinate permease (542 aa).

Residues 1-22 (MSILALVEDRPTPKEVYNWKIY) lie on the Cytoplasmic side of the membrane. Residues 23–43 (LLAAVASFTSCMIGYDSAFIG) traverse the membrane as a helical segment. Residues 44 to 74 (TTLALSSFREEFGFSTMSKTAVNLVSANIVS) lie on the Extracellular side of the membrane. A helical transmembrane segment spans residues 75–95 (CYQAGAFFGAFFAYPIGHFWG). Topologically, residues 96–97 (RK) are cytoplasmic. The chain crosses the membrane as a helical span at residues 98-118 (WGLLFAGTIFTLGAGLMLGAN). Over 119–130 (GDRGLGLLYGGR) the chain is Extracellular. The helical transmembrane segment at 131–151 (VLAGLGVGAGSNITPIYISEM) threads the bilayer. Residues 152 to 159 (APPSIRGR) are Cytoplasmic-facing. A helical membrane pass occupies residues 160 to 180 (LVGVYELGWQIGGLVGFWINY). Over 181–193 (GVSETLAPSHKQW) the chain is Extracellular. A helical transmembrane segment spans residues 194 to 214 (IIPFAVQLIPSGLLLIGAVFL). Residues 215–285 (KESPRWLFSR…AGTNKKVMYR (71 aa)) lie on the Cytoplasmic side of the membrane. Residues 286 to 306 (LFLGSMLFFWQNGSGINAINY) traverse the membrane as a helical segment. Over 307–325 (YSPTVFKSIGLHGANTSMF) the chain is Extracellular. The helical transmembrane segment at 326–346 (STGIFGVVKTVVTFVWLLYLI) threads the bilayer. Residues 347–352 (DRLGRR) lie on the Cytoplasmic side of the membrane. A helical transmembrane segment spans residues 353-373 (LLLLIGAAGAAVCLLIVGAYI). The Extracellular portion of the chain corresponds to 374 to 387 (KIADPASNPTQEMT). Residues 388 to 408 (GGGIAAMFFFYLYTVFYTPSW) form a helical membrane-spanning segment. At 409 to 456 (NGTPWVMNSEMFEPNMRSLAQACAAASNWLWNFLISRFTPQMFAKMEY) the chain is on the cytoplasmic side. The chain crosses the membrane as a helical span at residues 457-477 (GVWFFFASLMLLSIVFVFFLV). At 478-542 (PETKGIPLES…EHVSEDLPKV (65 aa)) the chain is on the extracellular side. A disordered region spans residues 523–542 (GYSKTGEQQVEHVSEDLPKV). The span at 531–542 (QVEHVSEDLPKV) shows a compositional bias: basic and acidic residues.

This sequence belongs to the major facilitator superfamily. Sugar transporter (TC 2.A.1.1) family. As to quaternary structure, interacts with creB. Ubiquitinated. Deubiquitinated by creB, probably to control its activity or amount.

It is found in the cell membrane. In terms of biological role, integral membrane transporter that imports quinic acid to be catabolized as a carbon source. This Aspergillus fumigatus (strain CBS 144.89 / FGSC A1163 / CEA10) (Neosartorya fumigata) protein is Probable quinate permease (qutD).